A 328-amino-acid chain; its full sequence is Phenylalanine--tRNA ligase alpha subunit (328 aa).

Residue glutamate 253 participates in Mg(2+) binding.

It belongs to the class-II aminoacyl-tRNA synthetase family. Phe-tRNA synthetase alpha subunit type 1 subfamily. As to quaternary structure, tetramer of two alpha and two beta subunits. The cofactor is Mg(2+).

The protein resides in the cytoplasm. The enzyme catalyses tRNA(Phe) + L-phenylalanine + ATP = L-phenylalanyl-tRNA(Phe) + AMP + diphosphate + H(+). This Coxiella burnetii (strain CbuG_Q212) (Coxiella burnetii (strain Q212)) protein is Phenylalanine--tRNA ligase alpha subunit.